Consider the following 356-residue polypeptide: Protein RecA (356 aa).

An ATP-binding site is contributed by 68-75 (GPESSGKT).

This sequence belongs to the RecA family.

It localises to the cytoplasm. In terms of biological role, can catalyze the hydrolysis of ATP in the presence of single-stranded DNA, the ATP-dependent uptake of single-stranded DNA by duplex DNA, and the ATP-dependent hybridization of homologous single-stranded DNAs. It interacts with LexA causing its activation and leading to its autocatalytic cleavage. This chain is Protein RecA, found in Clostridium botulinum (strain Alaska E43 / Type E3).